The chain runs to 160 residues: Putative antiporter subunit mnhE2 (160 aa).

A run of 3 helical transmembrane segments spans residues 22–42 (HFKFSTFFSGYLIGLIVIYIL), 55–75 (IWVAIKFLGVYLYQLITSSIS), and 100–120 (SDWAITFLTILIIITPGSTVI).

It belongs to the CPA3 antiporters (TC 2.A.63) subunit E family. May form a heterooligomeric complex that consists of seven subunits: mnhA2, mnhB2, mnhC2, mnhD2, mnhE2, mnhF2 and mnhG2.

It is found in the cell membrane. The protein is Putative antiporter subunit mnhE2 (mnhE2) of Staphylococcus aureus (strain Mu3 / ATCC 700698).